The chain runs to 365 residues: UDP-N-acetylglucosamine--N-acetylmuramyl-(pentapeptide) pyrophosphoryl-undecaprenol N-acetylglucosamine transferase (365 aa).

UDP-N-acetyl-alpha-D-glucosamine contacts are provided by residues Thr-17–Gly-19, Asn-129, Arg-167, Ser-194, Ile-250, Ala-269–Glu-274, and Gln-295.

It belongs to the glycosyltransferase 28 family. MurG subfamily.

It is found in the cell inner membrane. The catalysed reaction is di-trans,octa-cis-undecaprenyl diphospho-N-acetyl-alpha-D-muramoyl-L-alanyl-D-glutamyl-meso-2,6-diaminopimeloyl-D-alanyl-D-alanine + UDP-N-acetyl-alpha-D-glucosamine = di-trans,octa-cis-undecaprenyl diphospho-[N-acetyl-alpha-D-glucosaminyl-(1-&gt;4)]-N-acetyl-alpha-D-muramoyl-L-alanyl-D-glutamyl-meso-2,6-diaminopimeloyl-D-alanyl-D-alanine + UDP + H(+). Its pathway is cell wall biogenesis; peptidoglycan biosynthesis. Its function is as follows. Cell wall formation. Catalyzes the transfer of a GlcNAc subunit on undecaprenyl-pyrophosphoryl-MurNAc-pentapeptide (lipid intermediate I) to form undecaprenyl-pyrophosphoryl-MurNAc-(pentapeptide)GlcNAc (lipid intermediate II). This Shewanella sediminis (strain HAW-EB3) protein is UDP-N-acetylglucosamine--N-acetylmuramyl-(pentapeptide) pyrophosphoryl-undecaprenol N-acetylglucosamine transferase.